The chain runs to 64 residues: Neurotoxin lambda-MeuTx (64 aa).

Residues methionine 1–alanine 18 form the signal peptide. Residues glutamate 19–arginine 27 constitute a propeptide that is removed on maturation. Cystine bridges form between cysteine 29–cysteine 43, cysteine 36–cysteine 49, and cysteine 42–cysteine 58.

Belongs to the scorpion calcin-like family. As to expression, expressed by the venom gland.

The protein localises to the secreted. Functionally, voltage-gated potassium channel (Kv) inhibitor. In addition it may increase intracellular calcium release through the activation of nuclear inositol 1,4,5-trisphosphate receptors (ITPR) of cardiomyocytes, thereby causing an increase in the contraction frequency of these cells. The polypeptide is Neurotoxin lambda-MeuTx (Mesobuthus eupeus (Lesser Asian scorpion)).